The sequence spans 392 residues: Phosphoglycerate kinase (392 aa).

Substrate contacts are provided by residues Asp-21 to Asn-23, Arg-36, His-59 to Arg-62, Arg-113, and Arg-146. ATP is bound by residues Lys-197, Glu-314, and Gly-340 to Thr-343.

Belongs to the phosphoglycerate kinase family. Monomer.

Its subcellular location is the cytoplasm. The catalysed reaction is (2R)-3-phosphoglycerate + ATP = (2R)-3-phospho-glyceroyl phosphate + ADP. Its pathway is carbohydrate degradation; glycolysis; pyruvate from D-glyceraldehyde 3-phosphate: step 2/5. The protein is Phosphoglycerate kinase of Vesicomyosocius okutanii subsp. Calyptogena okutanii (strain HA).